Here is a 734-residue protein sequence, read N- to C-terminus: ABC transporter D family member 1 (734 aa).

The next 4 membrane-spanning stretches (helical) occupy residues 52-72, 112-132, 177-197, and 204-224; these read IIKILYAKPVIPLTLFLILFG, FAIGGSALLAAIINFIVSIMA, FTTLLASIVSQCITGPMVVVY, and TTIDWYAPLIVYGFFFLGYLI. One can recognise an ABC transmembrane type-1 domain in the interval 63 to 351; that stretch reads PLTLFLILFG…VEEEQAKIQF (289 aa). Positions 271–286 are enriched in basic and acidic residues; the sequence is HPEKRFDNNDYDHGYE. The segment at 271–296 is disordered; it reads HPEKRFDNNDYDHGYESDDSDQSCDE. A coiled-coil region spans residues 332 to 359; that stretch reads DSNDQKEELLVEEEQAKIQFEALLKNKK. A helical membrane pass occupies residues 374 to 394; it reads LFTYLSPIANYFIIAIPVFFL. The region spanning 492 to 729 is the ABC transporter domain; sequence ITLDDVTYFT…NNNNTNKIAE (238 aa). Position 525–532 (525–532) interacts with ATP; it reads GPSGSGKS. Low complexity predominate over residues 712–725; the sequence is QSNNINNNNNNNTN. A disordered region spans residues 712 to 734; the sequence is QSNNINNNNNNNTNKIAEDSVFD.

Belongs to the ABC transporter superfamily. ABCD family. Peroxisomal fatty acyl CoA transporter (TC 3.A.1.203) subfamily.

It localises to the membrane. It catalyses the reaction (9Z)-octadecenoyl-CoA(in) = (9Z)-octadecenoyl-CoA(out). This is ABC transporter D family member 1 (abcD1) from Dictyostelium discoideum (Social amoeba).